Consider the following 130-residue polypeptide: Holo-[acyl-carrier-protein] synthase (130 aa).

Aspartate 9 and glutamate 58 together coordinate Mg(2+).

It belongs to the P-Pant transferase superfamily. AcpS family. Mg(2+) is required as a cofactor.

Its subcellular location is the cytoplasm. It carries out the reaction apo-[ACP] + CoA = holo-[ACP] + adenosine 3',5'-bisphosphate + H(+). Transfers the 4'-phosphopantetheine moiety from coenzyme A to a Ser of acyl-carrier-protein. The chain is Holo-[acyl-carrier-protein] synthase from Mycobacterium marinum (strain ATCC BAA-535 / M).